The following is a 411-amino-acid chain: Tyrosine--tRNA ligase (411 aa).

Position 36 (Y36) interacts with L-tyrosine. A 'HIGH' region motif is present at residues 41–50 (PTADSLHVGH). L-tyrosine contacts are provided by Y172 and Q176. Residues 232 to 236 (KMGKT) carry the 'KMSKS' region motif. Residue K235 coordinates ATP. In terms of domain architecture, S4 RNA-binding spans 344 to 409 (YSIANILVVT…GKKNHIKVII (66 aa)).

It belongs to the class-I aminoacyl-tRNA synthetase family. TyrS type 1 subfamily. Homodimer.

The protein resides in the cytoplasm. The enzyme catalyses tRNA(Tyr) + L-tyrosine + ATP = L-tyrosyl-tRNA(Tyr) + AMP + diphosphate + H(+). Its function is as follows. Catalyzes the attachment of tyrosine to tRNA(Tyr) in a two-step reaction: tyrosine is first activated by ATP to form Tyr-AMP and then transferred to the acceptor end of tRNA(Tyr). The chain is Tyrosine--tRNA ligase from Malacoplasma penetrans (strain HF-2) (Mycoplasma penetrans).